Here is a 353-residue protein sequence, read N- to C-terminus: Photosystem II D2 protein (353 aa).

Position 2 is an N-acetylthreonine (threonine 2). Threonine 2 is subject to Phosphothreonine. Residues 41–61 (CAYFALGGWFTGTTFVTSWYT) form a helical membrane-spanning segment. Histidine 118 lines the chlorophyll a pocket. The chain crosses the membrane as a helical span at residues 125–141 (GFMLRQFELARSVQLRP). 2 residues coordinate pheophytin a: glutamine 130 and asparagine 143. A helical transmembrane segment spans residues 153–166 (VFVSVFLIYPLGQS). Chlorophyll a is bound at residue histidine 198. Residues 208–228 (AALLCAIHGATVENTLFEDGD) form a helical membrane-spanning segment. Histidine 215 and phenylalanine 262 together coordinate a plastoquinone. Histidine 215 serves as a coordination point for Fe cation. Histidine 269 provides a ligand contact to Fe cation. A helical transmembrane segment spans residues 279–295 (GLWMSAIGVVGLALNLR).

Belongs to the reaction center PufL/M/PsbA/D family. PSII is composed of 1 copy each of membrane proteins PsbA, PsbB, PsbC, PsbD, PsbE, PsbF, PsbH, PsbI, PsbJ, PsbK, PsbL, PsbM, PsbT, PsbX, PsbY, PsbZ, Psb30/Ycf12, at least 3 peripheral proteins of the oxygen-evolving complex and a large number of cofactors. It forms dimeric complexes. The D1/D2 heterodimer binds P680, chlorophylls that are the primary electron donor of PSII, and subsequent electron acceptors. It shares a non-heme iron and each subunit binds pheophytin, quinone, additional chlorophylls, carotenoids and lipids. There is also a Cl(-1) ion associated with D1 and D2, which is required for oxygen evolution. The PSII complex binds additional chlorophylls, carotenoids and specific lipids. is required as a cofactor.

The protein localises to the plastid. It localises to the chloroplast thylakoid membrane. It catalyses the reaction 2 a plastoquinone + 4 hnu + 2 H2O = 2 a plastoquinol + O2. Photosystem II (PSII) is a light-driven water:plastoquinone oxidoreductase that uses light energy to abstract electrons from H(2)O, generating O(2) and a proton gradient subsequently used for ATP formation. It consists of a core antenna complex that captures photons, and an electron transfer chain that converts photonic excitation into a charge separation. The D1/D2 (PsbA/PsbD) reaction center heterodimer binds P680, the primary electron donor of PSII as well as several subsequent electron acceptors. D2 is needed for assembly of a stable PSII complex. The polypeptide is Photosystem II D2 protein (Oryza nivara (Indian wild rice)).